The chain runs to 478 residues: tRNA modification GTPase MnmE (478 aa).

The (6S)-5-formyl-5,6,7,8-tetrahydrofolate site is built by arginine 36, glutamate 94, and lysine 133. The region spanning 230–402 (GIHVVLAGRP…LVETLCAKVG (173 aa)) is the TrmE-type G domain. Position 240 (asparagine 240) interacts with K(+). GTP contacts are provided by residues 240-245 (NAGKSS), 259-265 (TDVAGTT), and 284-287 (DTAG). Residue serine 244 participates in Mg(2+) binding. Positions 259, 261, and 264 each coordinate K(+). Mg(2+) is bound at residue threonine 265. (6S)-5-formyl-5,6,7,8-tetrahydrofolate is bound at residue lysine 478.

The protein belongs to the TRAFAC class TrmE-Era-EngA-EngB-Septin-like GTPase superfamily. TrmE GTPase family. In terms of assembly, homodimer. Heterotetramer of two MnmE and two MnmG subunits. The cofactor is K(+).

The protein resides in the cytoplasm. Its function is as follows. Exhibits a very high intrinsic GTPase hydrolysis rate. Involved in the addition of a carboxymethylaminomethyl (cmnm) group at the wobble position (U34) of certain tRNAs, forming tRNA-cmnm(5)s(2)U34. The sequence is that of tRNA modification GTPase MnmE from Psychrobacter cryohalolentis (strain ATCC BAA-1226 / DSM 17306 / VKM B-2378 / K5).